We begin with the raw amino-acid sequence, 277 residues long: Release factor glutamine methyltransferase (277 aa).

Residues 117–121 (GTGTG), aspartate 140, tryptophan 168, and asparagine 183 each bind S-adenosyl-L-methionine. 183-186 (NPPY) is a substrate binding site.

The protein belongs to the protein N5-glutamine methyltransferase family. PrmC subfamily.

The enzyme catalyses L-glutaminyl-[peptide chain release factor] + S-adenosyl-L-methionine = N(5)-methyl-L-glutaminyl-[peptide chain release factor] + S-adenosyl-L-homocysteine + H(+). Its function is as follows. Methylates the class 1 translation termination release factors RF1/PrfA and RF2/PrfB on the glutamine residue of the universally conserved GGQ motif. This chain is Release factor glutamine methyltransferase, found in Shigella flexneri.